The following is a 213-amino-acid chain: Phosphoribosyl-dephospho-CoA transferase (213 aa).

Residues aspartate 135 and aspartate 137 contribute to the active site.

This sequence belongs to the MdcG family.

It carries out the reaction apo-[malonate decarboxylase ACP] + 2'-(5''-triphospho-alpha-D-ribosyl)-3'-dephospho-CoA = holo-[malonate decarboxylase ACP] + diphosphate. Functionally, transfers 2'-(5-triphosphoribosyl)-3'-dephosphocoenzyme-A to the apo-[acyl-carrier-protein] of the malonate decarboxylase to yield holo-[acyl-carrier-protein]. This is Phosphoribosyl-dephospho-CoA transferase from Xanthomonas euvesicatoria pv. vesicatoria (strain 85-10) (Xanthomonas campestris pv. vesicatoria).